Reading from the N-terminus, the 77-residue chain is MSTIEERVKKIVSEQLGVKEEEITNASSFVDDLGADSLDTVELVMALEEEFETEIPDEEAEKITTVQEAIDYVVSHQ.

Residues 2–77 form the Carrier domain; the sequence is STIEERVKKI…EAIDYVVSHQ (76 aa). Ser-37 bears the O-(pantetheine 4'-phosphoryl)serine mark.

The protein belongs to the acyl carrier protein (ACP) family. In terms of processing, 4'-phosphopantetheine is transferred from CoA to a specific serine of apo-ACP by AcpS. This modification is essential for activity because fatty acids are bound in thioester linkage to the sulfhydryl of the prosthetic group.

The protein localises to the cytoplasm. It functions in the pathway lipid metabolism; fatty acid biosynthesis. Its function is as follows. Carrier of the growing fatty acid chain in fatty acid biosynthesis. In Oceanospirillum linum, this protein is Acyl carrier protein.